The following is a 97-amino-acid chain: Mapk-regulated corepressor-interacting protein 1 (97 aa).

Disordered regions lie at residues 1 to 29 (MTSS…NEIF) and 72 to 97 (SNSL…PKKS). Residues 17–28 (ASNTRSPSSNEI) show a composition bias toward polar residues. Positions 82–97 (DLNDLKRRTVQDPKKS) are enriched in basic and acidic residues.

It belongs to the MCRIP family.

The protein localises to the nucleus. The protein resides in the cytoplasm. Its subcellular location is the stress granule. In terms of biological role, may play a role in the regulation of the epithelial-mesenchymal transition. In Xenopus tropicalis (Western clawed frog), this protein is Mapk-regulated corepressor-interacting protein 1 (Mcrip1).